The chain runs to 236 residues: Flagellar L-ring protein (236 aa).

The N-terminal stretch at 1–24 (MKNKNRLNTIKLLSISLLIAVTTA) is a signal peptide. Cysteine 25 carries the N-palmitoyl cysteine lipid modification. Cysteine 25 carries S-diacylglycerol cysteine lipidation.

The protein belongs to the FlgH family. The basal body constitutes a major portion of the flagellar organelle and consists of four rings (L,P,S, and M) mounted on a central rod.

It localises to the cell outer membrane. It is found in the bacterial flagellum basal body. Functionally, assembles around the rod to form the L-ring and probably protects the motor/basal body from shearing forces during rotation. The sequence is that of Flagellar L-ring protein from Colwellia psychrerythraea (strain 34H / ATCC BAA-681) (Vibrio psychroerythus).